The primary structure comprises 138 residues: Acidic phospholipase A2 PL1 (138 aa).

Positions 1–16 (MRALWIVAVCLIGAEG) are cleaved as a signal peptide. Intrachain disulfides connect cysteine 42–cysteine 131, cysteine 44–cysteine 60, cysteine 59–cysteine 111, cysteine 65–cysteine 138, cysteine 66–cysteine 104, cysteine 73–cysteine 97, and cysteine 91–cysteine 102. Ca(2+) is bound by residues tyrosine 43, glycine 45, and glycine 47. The active site involves histidine 63. A Ca(2+)-binding site is contributed by aspartate 64. Aspartate 105 is an active-site residue.

The protein belongs to the phospholipase A2 family. Group II subfamily. D49 sub-subfamily. Ca(2+) serves as cofactor. As to expression, expressed by the venom gland.

It localises to the secreted. It catalyses the reaction a 1,2-diacyl-sn-glycero-3-phosphocholine + H2O = a 1-acyl-sn-glycero-3-phosphocholine + a fatty acid + H(+). Its function is as follows. PLA2 catalyzes the calcium-dependent hydrolysis of the 2-acyl groups in 3-sn-phosphoglycerides. The sequence is that of Acidic phospholipase A2 PL1 from Vipera renardi (Steppe viper).